Here is a 109-residue protein sequence, read N- to C-terminus: Large ribosomal subunit protein uL24 (109 aa).

Residues 85–109 (KYGTDPKTNKKVRLSRKTNNLVGGQ) are disordered.

Belongs to the universal ribosomal protein uL24 family. Part of the 50S ribosomal subunit.

Its function is as follows. One of two assembly initiator proteins, it binds directly to the 5'-end of the 23S rRNA, where it nucleates assembly of the 50S subunit. Functionally, one of the proteins that surrounds the polypeptide exit tunnel on the outside of the subunit. The polypeptide is Large ribosomal subunit protein uL24 (Mycoplasmoides gallisepticum (strain R(low / passage 15 / clone 2)) (Mycoplasma gallisepticum)).